We begin with the raw amino-acid sequence, 293 residues long: ATP synthase subunit a (293 aa).

Helical transmembrane passes span Q39–I59, F73–G93, Y102–I122, S128–I148, T172–L192, I198–T218, L224–F244, and D245–A265.

This sequence belongs to the ATPase A chain family. In terms of assembly, F-type ATPases have 2 components, CF(1) - the catalytic core - and CF(0) - the membrane proton channel. CF(1) has five subunits: alpha(3), beta(3), gamma(1), delta(1), epsilon(1). CF(0) has three main subunits: a(1), b(2) and c(9-12). The alpha and beta chains form an alternating ring which encloses part of the gamma chain. CF(1) is attached to CF(0) by a central stalk formed by the gamma and epsilon chains, while a peripheral stalk is formed by the delta and b chains.

It is found in the cell membrane. Key component of the proton channel; it plays a direct role in the translocation of protons across the membrane. This is ATP synthase subunit a from Mycoplasma pneumoniae (strain ATCC 29342 / M129 / Subtype 1) (Mycoplasmoides pneumoniae).